Here is a 240-residue protein sequence, read N- to C-terminus: Sugar fermentation stimulation protein homolog (240 aa).

The protein belongs to the SfsA family.

The protein is Sugar fermentation stimulation protein homolog of Crocosphaera subtropica (strain ATCC 51142 / BH68) (Cyanothece sp. (strain ATCC 51142)).